A 778-amino-acid chain; its full sequence is MKTSQFLSLLLLAGIAQAIVPPREPRPPTGGGNKLLTYKECVPRATISPRSTSLAWINSDEDGQYISQSDDGALILQNIVTNTNKTLVAADKVPKGYYDYWFKPDLSAVLWATNYTKQYRHSYFANYFILDIEKGSLTPLSQDQAGDIQYAQWSPMDNSIAYVRGNDLYIWNNGKTKRITENGGPDIFNGVPDWVYEEEIFGDRFALWFSPDGEYLAYLRFNETGVPTYTIPYYKNKQKIAPAYPRELEIRYPKVSAKNPTVQFHLLNIASSQETTIPVTAFPENDLVIGEVAWLSSGHDSVAYRAFNRVQDREKIVSVKVESKESKVIRERDGTDGWIDNLLSMSYIGDVNGKEYYVDISDASGWAHIYLYPVDGGKEIALTTGEWEVVAILKVDTKKKLIYFTSTKYHSTTRHVYSVSYDTKVMTPLVNDKEAAYYTASFSAKGGYYILSYQGPNVPYQELYSTKDSKKPLKTITSNDALLEKLKEYKLPKVSFFEIKLPSGETLNVKQRLPPNFNPHKKYPVLFTPYGGPGAQEVSQAWNSLDFKSYITSDPELEYVTWTVDNRGTGYKGRKFRSAVAKRLGFLEPQDQVFAAKELLKNRWADKDHIGIWGWSYGGFLTAKTLETDSGVFTFGISTAPVSDFRLYDSMYTERYMKTVELNADGYSETAVHKVDGFKNLKGHYLIQHGTGDDNVHFQNAAVLSNTLMNGGVTADKLTTQWFTDSDHGIRYDMDSTYQYKQLAKMVYDQKQRKPERPPMHQWSKRVLAALFGERAEE.

Positions 1-18 are cleaved as a signal peptide; it reads MKTSQFLSLLLLAGIAQA. 3 N-linked (GlcNAc...) asparagine glycosylation sites follow: asparagine 84, asparagine 114, and asparagine 222. Active-site charge relay system residues include serine 616, aspartate 693, and histidine 728.

Belongs to the peptidase S9B family.

The protein resides in the secreted. The enzyme catalyses Release of an N-terminal dipeptide, Xaa-Yaa-|-Zaa-, from a polypeptide, preferentially when Yaa is Pro, provided Zaa is neither Pro nor hydroxyproline.. Extracellular dipeptidyl-peptidase which removes N-terminal dipeptides sequentially from polypeptides having unsubstituted N-termini provided that the penultimate residue is proline. Contributes to pathogenicity. This chain is Probable dipeptidyl peptidase 4 (DPP4), found in Arthroderma benhamiae (strain ATCC MYA-4681 / CBS 112371) (Trichophyton mentagrophytes).